A 1203-amino-acid chain; its full sequence is Regulator of telomere elongation helicase 1 (1203 aa).

One can recognise a Helicase ATP-binding domain in the interval 7 to 296 (NGVTVDFPFQ…ARVTQQGELQ (290 aa)). ATP is bound at residue 42–49 (SPTGTGKT). [4Fe-4S] cluster is bound by residues cysteine 145, cysteine 163, cysteine 172, and cysteine 207. The short motif at 151-167 (KKQESNHMQISLCRKKV) is the Nuclear localization signal element. Residues 250 to 253 (DEAH) carry the DEAH box motif. Positions 871–877 (QKGGRKK) match the Nuclear localization signal motif. Disordered stretches follow at residues 998 to 1020 (QLDPGQHLNQGQPHLSAHPTSKG) and 1120 to 1203 (TTGK…RSKQ). Over residues 1004-1020 (HLNQGQPHLSAHPTSKG) the composition is skewed to polar residues. Residues 1123–1134 (KDLELEGPRDES) show a composition bias toward basic and acidic residues. The PIP-box motif lies at 1160-1167 (QSKISSFF). Basic and acidic residues predominate over residues 1169–1181 (QRPDESVRSDDTT).

This sequence belongs to the helicase family. RAD3/XPD subfamily. Interacts with TERF1. Interacts (via PIP-box) with PCNA; the interaction is direct and essential for suppressing telomere fragility. Interacts with MMS19; the interaction mediates the association of RTEL1 with the cytosolic iron-sulfur protein assembly (CIA) complex. As to expression, widely expressed. Expressed in spleen, thymus, Peyer patches, kidney, and intestine. Not expressed in brain, heart, lung, skeletal muscles, skin and white fat. In the adult gonad, it is highly expressed in the testis, mainly in the spermatogonia and meiotic spermatocytes.

The protein resides in the nucleus. The enzyme catalyses ATP + H2O = ADP + phosphate + H(+). A probable ATP-dependent DNA helicase implicated in telomere-length regulation, DNA repair and the maintenance of genomic stability. Acts as an anti-recombinase to counteract toxic recombination and limit crossover during meiosis. Regulates meiotic recombination and crossover homeostasis by physically dissociating strand invasion events and thereby promotes noncrossover repair by meiotic synthesis dependent strand annealing (SDSA) as well as disassembly of D loop recombination intermediates. Also disassembles T loops and prevents telomere fragility by counteracting telomeric G4-DNA structures, which together ensure the dynamics and stability of the telomere. In Mus musculus (Mouse), this protein is Regulator of telomere elongation helicase 1.